The chain runs to 296 residues: Protoheme IX farnesyltransferase 1 (296 aa).

A run of 8 helical transmembrane segments spans residues 14–34, 41–61, 86–106, 108–128, 141–161, 165–185, 230–250, and 274–294; these read IVLLLVITAVTTMYAGDALSA, LWDYAHLMAAGALASAGSSAL, IGENIVLAYGLAISSAAVVYA, FLLNAPTAFFIALGIFSYVII, IVIGGIAGSAASWAGWTAATG, LLGFLIGFLVFVWTPSHFWCL, AFGMGLVYLVIAVASGGLMLV, and YLTIIFAAVALDAAFHYPFPF.

It belongs to the UbiA prenyltransferase family. Protoheme IX farnesyltransferase subfamily.

It is found in the cell membrane. It carries out the reaction heme b + (2E,6E)-farnesyl diphosphate + H2O = Fe(II)-heme o + diphosphate. Its pathway is porphyrin-containing compound metabolism; heme O biosynthesis; heme O from protoheme: step 1/1. Converts heme B (protoheme IX) to heme O by substitution of the vinyl group on carbon 2 of heme B porphyrin ring with a hydroxyethyl farnesyl side group. This chain is Protoheme IX farnesyltransferase 1, found in Cenarchaeum symbiosum (strain A).